Reading from the N-terminus, the 186-residue chain is Lipid A palmitoyltransferase PagP (186 aa).

Positions 1–25 are cleaved as a signal peptide; sequence MNVSKYVAIFFFVFIQLISVGKVFA. Catalysis depends on residues H58, D101, and S102.

It belongs to the lipid A palmitoyltransferase family. Homodimer.

The protein resides in the cell outer membrane. It carries out the reaction lipid A (E. coli) + a 1-hexadecanoyl-2-acyl-sn-glycero-3-phosphocholine = hepta-acyl lipid A (E. coli) + a 2-acyl-sn-glycero-3-phosphocholine. The catalysed reaction is lipid IIA + a 1-hexadecanoyl-2-acyl-sn-glycero-3-phosphocholine = lipid IIB + a 2-acyl-sn-glycero-3-phosphocholine. The enzyme catalyses lipid IVA (E. coli) + a 1-hexadecanoyl-2-acyl-sn-glycero-3-phosphocholine = lipid IVB (E. coli) + a 2-acyl-sn-glycero-3-phosphocholine. Transfers a palmitate residue from the sn-1 position of a phospholipid to the N-linked hydroxymyristate on the proximal unit of lipid A or its precursors. The polypeptide is Lipid A palmitoyltransferase PagP (Escherichia coli O6:H1 (strain CFT073 / ATCC 700928 / UPEC)).